The chain runs to 310 residues: Probable RuBisCO transcriptional regulator (310 aa).

The 58-residue stretch at 6-63 (FTLDQLRILKAIASEGSFKKAAESLYISQPAVSLQIQNLEKQLNIPIFDRANRKAVFT) folds into the HTH lysR-type domain. A DNA-binding region (H-T-H motif) is located at residues 23–42 (FKKAAESLYISQPAVSLQIQ).

It belongs to the LysR transcriptional regulatory family.

The protein localises to the plastid. Its subcellular location is the chloroplast. Functionally, trans-acting transcriptional regulator of RuBisCO genes (rbcL and rbcS) expression. The protein is Probable RuBisCO transcriptional regulator (rbcR) of Guillardia theta (Cryptophyte).